The chain runs to 439 residues: Beta-1,3-galactosyl-O-glycosyl-glycoprotein beta-1,6-N-acetylglucosaminyltransferase (439 aa).

At methionine 1–arginine 11 the chain is on the cytoplasmic side. Residues glycine 12–leucine 29 traverse the membrane as a helical; Signal-anchor for type II membrane protein segment. Over arginine 30–leucine 439 the chain is Lumenal. N-linked (GlcNAc...) asparagine; by host glycosylation is found at asparagine 71 and asparagine 107. Disulfide bonds link cysteine 72–cysteine 229, cysteine 163–cysteine 383, cysteine 184–cysteine 211, and cysteine 392–cysteine 424.

It belongs to the glycosyltransferase 14 family.

It is found in the host Golgi apparatus membrane. It carries out the reaction a 3-O-[beta-D-galactosyl-(1-&gt;3)-N-acetyl-alpha-D-galactosaminyl]-L-seryl-[protein] + UDP-N-acetyl-alpha-D-glucosamine = 3-O-{beta-D-galactosyl-(1-&gt;3)-[N-acetyl-beta-D-glucosaminyl-(1-&gt;6)]-N-acetyl-alpha-D-galactosaminyl}-L-seryl-[protein] + UDP + H(+). It catalyses the reaction a 3-O-[beta-D-galactosyl-(1-&gt;3)-N-acetyl-alpha-D-galactosaminyl]-L-threonyl-[protein] + UDP-N-acetyl-alpha-D-glucosamine = a 3-O-{beta-D-galactosyl-(1-&gt;3)-[N-acetyl-beta-D-glucosaminyl-(1-&gt;6)]-N-acetyl-alpha-D-galactosaminyl}-L-threonyl-[protein] + UDP + H(+). The catalysed reaction is a beta-D-Gal-(1-&gt;4)-beta-D-GlcNAc-(1-&gt;3)-beta-D-Gal-(1-&gt;4)-beta-D-GlcNAc derivative + UDP-N-acetyl-alpha-D-glucosamine = a beta-D-Gal-(1-&gt;4)-beta-D-GlcNAc-(1-&gt;3)-[beta-D-GlcNAc-(1-&gt;6)]-beta-D-Gal-(1-&gt;4)-N-acetyl-beta-D-glucosaminyl derivative + UDP + H(+). The enzyme catalyses 3-O-[N-acetyl-beta-D-glucosaminyl-(1-&gt;3)-N-acetyl-alpha-D-galactosaminyl]-L-seryl-[protein] + UDP-N-acetyl-alpha-D-glucosamine = 3-O-[N-acetyl-beta-D-glucosaminyl-(1-&gt;3)-[N-acetyl-beta-D-glucosaminyl-(1-&gt;6)]-N-acetyl-alpha-D-galactosaminyl]-L-seryl-[protein] + UDP + H(+). It carries out the reaction a 3-O-[N-acetyl-beta-D-glucosaminyl-(1-&gt;3)-N-acetyl-alpha-D-galactosaminyl]-L-threonyl-[protein] + UDP-N-acetyl-alpha-D-glucosamine = 3-O-[N-acetyl-beta-D-glucosaminyl-(1-&gt;3)-[N-acetyl-beta-D-glucosaminyl-(1-&gt;6)]-N-acetyl-alpha-D-galactosaminyl]-L-threonyl-[protein] + UDP + H(+). The protein operates within protein modification; protein glycosylation. Its function is as follows. Non-essential glycosyltransferase that can synthesize all known mucin beta 6 N-acetylglucosaminides. Mediates core 2 and core 4 O-glycan branching, 2 important steps in mucin-type biosynthesis. Has also I-branching enzyme activity by converting linear into branched poly-N-acetyllactosaminoglycans. Contributes to the post-translational modifications of structural proteins. In Bovine herpesvirus 4 (BoHV-4), this protein is Beta-1,3-galactosyl-O-glycosyl-glycoprotein beta-1,6-N-acetylglucosaminyltransferase (Bo17).